The primary structure comprises 64 residues: Enteric beta-defensin (64 aa).

A signal peptide spans 1–26 (MRLHHLLLTLLFLVLSAGSGFTQGIS). 3 disulfides stabilise this stretch: Cys-31/Cys-60, Cys-38/Cys-53, and Cys-43/Cys-61.

This sequence belongs to the beta-defensin family. LAP/TAP subfamily. As to expression, inducibly expressed in enteric epithelial cells.

The protein resides in the secreted. Has antibacterial activity. This Bos taurus (Bovine) protein is Enteric beta-defensin (EBD).